Here is a 616-residue protein sequence, read N- to C-terminus: Protein RIK (616 aa).

Over residues 1-11 (MTEDRAHKVAD) the composition is skewed to basic and acidic residues. Residues 1–32 (MTEDRAHKVADEPAASGRQSPERKKRKWDQPA) are disordered. The KH domain occupies 198 to 304 (GTTSESISVP…AKVLAENLLD (107 aa)). 3 stretches are compositionally biased toward polar residues: residues 432–449 (TQAV…TKGN), 475–484 (TESQNSQQGS), and 491–502 (LDSSGNIGSSSI). Disordered regions lie at residues 432–455 (TQAV…LDAE) and 467–616 (LPVS…HTCV). Positions 534–564 (LPPPLKSMLPLPPRSMPPPPPKSMPPPPPKF) are enriched in pro residues. Composition is skewed to basic and acidic residues over residues 565–575 (PSDEFLSRNEN) and 598–610 (SERR…EEKN).

Interacts with RS2. In terms of tissue distribution, expressed in vegetative tissues. More abundant in apices and young leaf primordia than in fully expanded leaf tissues.

The protein resides in the nucleus. The polypeptide is Protein RIK (Zea mays (Maize)).